The sequence spans 201 residues: 3-isopropylmalate dehydratase small subunit (201 aa).

Belongs to the LeuD family. LeuD type 1 subfamily. Heterodimer of LeuC and LeuD.

The catalysed reaction is (2R,3S)-3-isopropylmalate = (2S)-2-isopropylmalate. The protein operates within amino-acid biosynthesis; L-leucine biosynthesis; L-leucine from 3-methyl-2-oxobutanoate: step 2/4. Functionally, catalyzes the isomerization between 2-isopropylmalate and 3-isopropylmalate, via the formation of 2-isopropylmaleate. This is 3-isopropylmalate dehydratase small subunit from Pasteurella multocida (strain Pm70).